We begin with the raw amino-acid sequence, 212 residues long: dITP/XTP pyrophosphatase (212 aa).

7–12 serves as a coordination point for substrate; that stretch reads SNNAKK. Residues Glu-39 and Asp-68 each coordinate Mg(2+). Residue Asp-68 is the Proton acceptor of the active site. Substrate-binding positions include Ser-69, 165 to 168, Lys-188, and 193 to 194; these read FGYD and HR.

This sequence belongs to the HAM1 NTPase family. Homodimer. The cofactor is Mg(2+).

It catalyses the reaction XTP + H2O = XMP + diphosphate + H(+). It carries out the reaction dITP + H2O = dIMP + diphosphate + H(+). The enzyme catalyses ITP + H2O = IMP + diphosphate + H(+). In terms of biological role, pyrophosphatase that catalyzes the hydrolysis of nucleoside triphosphates to their monophosphate derivatives, with a high preference for the non-canonical purine nucleotides XTP (xanthosine triphosphate), dITP (deoxyinosine triphosphate) and ITP. Seems to function as a house-cleaning enzyme that removes non-canonical purine nucleotides from the nucleotide pool, thus preventing their incorporation into DNA/RNA and avoiding chromosomal lesions. The sequence is that of dITP/XTP pyrophosphatase from Leptothrix cholodnii (strain ATCC 51168 / LMG 8142 / SP-6) (Leptothrix discophora (strain SP-6)).